The following is a 372-amino-acid chain: MAAPVAPSEPQASRAPQPPVCLLVLGMAGSGKTTFVQRLTGHLHNKGCPPYVINLDPAVHEVPFPANIDIRDTVKYKEVMKQYGLGPNGGIVTSLNLFATRFDQVMKFIEKAQNTFRYVLIDTPGQIEVFTWSASGTIITEALASSFPTVVIYVMDTSRSTNPVTFMSNMLYACSILYKTKLPFIVVMNKTDIIDHSFAVEWMQDFEAFQDALNQETTYVSNLTRSMSLVLDEFYSSLRVVGVSAVVGTGFDELCTQVTSAAEEYEREYRPEYERLKKSLANAQSNQQKEQLERLRKDMGSVALDPEAGKGNASPVLDPSDLILTRGTLDEEDEEADSDTDDIDHRVTEESREEPAFQNFMEESMAHWKRNK.

Ala2 is modified (N-acetylalanine). 29-34 (GSGKTT) contributes to the GTP binding site. Positions 86–88 (GPN) match the Gly-Pro-Asn (GPN)-loop; involved in dimer interface motif. Residue 189 to 192 (NKTD) participates in GTP binding. 2 positions are modified to phosphoserine: Ser301 and Ser314. The tract at residues 303-372 (ALDPEAGKGN…ESMAHWKRNK (70 aa)) is disordered. A Phosphothreonine modification is found at Thr328. Residues 330–342 (DEEDEEADSDTDD) show a composition bias toward acidic residues. Position 338 is a phosphoserine (Ser338). Phosphothreonine is present on Thr340. A compositionally biased stretch (basic and acidic residues) spans 343–355 (IDHRVTEESREEP).

The protein belongs to the GPN-loop GTPase family. As to quaternary structure, heterodimer with GPN3. Binds to RNA polymerase II (RNAPII). Interacts directly with RNAPII subunits RPB4 and RPB7 and the CTD of RPB1. Interacts with XPA.

Its subcellular location is the cytoplasm. It localises to the nucleus. Small GTPase required for proper nuclear import of RNA polymerase II (RNAPII). May act at an RNAP assembly step prior to nuclear import. Forms an interface between the RNA polymerase II enzyme and chaperone/scaffolding proteins, suggesting that it is required to connect RNA polymerase II to regulators of protein complex formation. May be involved in nuclear localization of XPA. This Mus musculus (Mouse) protein is GPN-loop GTPase 1.